Consider the following 101-residue polypeptide: Small ribosomal subunit protein bS16 (101 aa).

The protein belongs to the bacterial ribosomal protein bS16 family.

In Ureaplasma urealyticum serovar 10 (strain ATCC 33699 / Western), this protein is Small ribosomal subunit protein bS16.